Reading from the N-terminus, the 37-residue chain is Large ribosomal subunit protein bL36 (37 aa).

Belongs to the bacterial ribosomal protein bL36 family.

In Dictyoglomus thermophilum (strain ATCC 35947 / DSM 3960 / H-6-12), this protein is Large ribosomal subunit protein bL36.